A 473-amino-acid chain; its full sequence is Cysteine--tRNA ligase (473 aa).

Cysteine 28 lines the Zn(2+) pocket. Positions 30-40 match the 'HIGH' region motif; it reads MTVYDFCHIGH. Residues cysteine 212, histidine 237, and glutamate 241 each coordinate Zn(2+). The 'KMSKS' region motif lies at 277–281; that stretch reads KMSKS. Lysine 280 lines the ATP pocket.

The protein belongs to the class-I aminoacyl-tRNA synthetase family. Monomer. Zn(2+) serves as cofactor.

It is found in the cytoplasm. It carries out the reaction tRNA(Cys) + L-cysteine + ATP = L-cysteinyl-tRNA(Cys) + AMP + diphosphate. In Polynucleobacter necessarius subsp. necessarius (strain STIR1), this protein is Cysteine--tRNA ligase.